A 276-amino-acid chain; its full sequence is NAD kinase (276 aa).

Catalysis depends on Asp-68, which acts as the Proton acceptor. NAD(+)-binding positions include 68–69, Arg-73, 138–139, Lys-149, Asp-168, 179–184, and Gln-237; these read DG, NE, and TAYSLS.

This sequence belongs to the NAD kinase family. A divalent metal cation serves as cofactor.

The protein resides in the cytoplasm. It carries out the reaction NAD(+) + ATP = ADP + NADP(+) + H(+). Its function is as follows. Involved in the regulation of the intracellular balance of NAD and NADP, and is a key enzyme in the biosynthesis of NADP. Catalyzes specifically the phosphorylation on 2'-hydroxyl of the adenosine moiety of NAD to yield NADP. The chain is NAD kinase from Methanopyrus kandleri (strain AV19 / DSM 6324 / JCM 9639 / NBRC 100938).